Consider the following 394-residue polypeptide: Elongation factor Tu (394 aa).

Positions 10–204 (KPHINIGTIG…AVDDNIPTPE (195 aa)) constitute a tr-type G domain. Residues 19 to 26 (GHVDHGKT) form a G1 region. 19–26 (GHVDHGKT) is a GTP binding site. Thr26 contacts Mg(2+). The interval 60 to 64 (GITIN) is G2. Residues 81-84 (DCPG) are G3. GTP-binding positions include 81-85 (DCPGH) and 136-139 (NKID). The interval 136–139 (NKID) is G4. The G5 stretch occupies residues 174-176 (SAL).

This sequence belongs to the TRAFAC class translation factor GTPase superfamily. Classic translation factor GTPase family. EF-Tu/EF-1A subfamily. Monomer.

Its subcellular location is the cytoplasm. It carries out the reaction GTP + H2O = GDP + phosphate + H(+). GTP hydrolase that promotes the GTP-dependent binding of aminoacyl-tRNA to the A-site of ribosomes during protein biosynthesis. The chain is Elongation factor Tu from Chlamydia caviae (strain ATCC VR-813 / DSM 19441 / 03DC25 / GPIC) (Chlamydophila caviae).